A 59-amino-acid chain; its full sequence is Large ribosomal subunit protein bL32 (59 aa).

Residues 1–59 (MAVQQNKKSPSKRGMHRSHDHLSVAPLAVEPTTGETHLRHHVSPNGYYRGRKVIKTKND) are disordered. Composition is skewed to basic residues over residues 9–19 (SPSKRGMHRSH) and 49–59 (RGRKVIKTKND).

This sequence belongs to the bacterial ribosomal protein bL32 family.

This Cupriavidus metallidurans (strain ATCC 43123 / DSM 2839 / NBRC 102507 / CH34) (Ralstonia metallidurans) protein is Large ribosomal subunit protein bL32.